We begin with the raw amino-acid sequence, 140 residues long: Sex-regulated protein janus-B (140 aa).

Arginine 42 serves as a coordination point for substrate. Histidine 69 (proton acceptor) is an active-site residue. Residue 110 to 112 (SRT) coordinates substrate.

Belongs to the janus family.

In terms of biological role, janA and janB regulate somatic sex differentiation. The protein is Sex-regulated protein janus-B (janB) of Drosophila erecta (Fruit fly).